A 258-amino-acid polypeptide reads, in one-letter code: MIEFKNVSLVYPNGTQGLKDVNLKINEGEFVVIVGLSGAGKSTLIRSMNRLVTPTEGELLIDGENILPYSSRQLRKLRTKVGMIFQNYNLVKRSSVMKNVISGRLGHVGTFASLLNLYPKEDVALAYRSLQRVNIAEKVYQRADQLSGGQQQRVAIARVLTQQPKIILADEPVASLDPPTSHQVMTYLRKINKEDKITTIVNLHFIDMAMEYADRIIGMRAGEVVFDGPASDVSEETFEEIYGRKIREDDLVGGQDNE.

One can recognise an ABC transporter domain in the interval 2–246 (IEFKNVSLVY…TFEEIYGRKI (245 aa)). 35-42 (GLSGAGKS) contacts ATP.

It belongs to the ABC transporter superfamily. Phosphonates importer (TC 3.A.1.9.1) family. In terms of assembly, the complex is composed of two ATP-binding proteins (PhnC), two transmembrane proteins (PhnE) and a solute-binding protein (PhnD).

It is found in the cell membrane. It carries out the reaction phosphonate(out) + ATP + H2O = phosphonate(in) + ADP + phosphate + H(+). Part of the ABC transporter complex PhnCDE involved in phosphonates import. Responsible for energy coupling to the transport system. The polypeptide is Phosphonates import ATP-binding protein PhnC 3 (Halalkalibacterium halodurans (strain ATCC BAA-125 / DSM 18197 / FERM 7344 / JCM 9153 / C-125) (Bacillus halodurans)).